The following is an 86-amino-acid chain: Small ribosomal subunit protein eS21 (86 aa).

The protein belongs to the eukaryotic ribosomal protein eS21 family. Component of the 40S small ribosomal subunit.

Its subcellular location is the cytoplasm. It is found in the cytosol. The protein resides in the rough endoplasmic reticulum. The chain is Small ribosomal subunit protein eS21 (RPS21) from Suberites domuncula (Sponge).